Reading from the N-terminus, the 177-residue chain is Probable inosine/xanthosine triphosphatase (177 aa).

It belongs to the YjjX NTPase family. Homodimer. It depends on Mg(2+) as a cofactor. Requires Mn(2+) as cofactor.

It catalyses the reaction XTP + H2O = XDP + phosphate + H(+). The catalysed reaction is ITP + H2O = IDP + phosphate + H(+). Functionally, phosphatase that hydrolyzes non-canonical purine nucleotides such as XTP and ITP to their respective diphosphate derivatives. Probably excludes non-canonical purines from DNA/RNA precursor pool, thus preventing their incorporation into DNA/RNA and avoiding chromosomal lesions. The chain is Probable inosine/xanthosine triphosphatase from Pyrobaculum arsenaticum (strain DSM 13514 / JCM 11321 / PZ6).